We begin with the raw amino-acid sequence, 338 residues long: L-asparaginase 1 (338 aa).

The Asparaginase/glutaminase domain maps to 4–329; that stretch reads KSIYVAYTGG…ETIRKAMSQN (326 aa). The O-isoaspartyl threonine intermediate role is filled by threonine 14. Substrate contacts are provided by residues 59–61 and 91–92; these read DSS and TD.

Belongs to the asparaginase 1 family. As to quaternary structure, homotetramer.

It is found in the cytoplasm. The catalysed reaction is L-asparagine + H2O = L-aspartate + NH4(+). In Escherichia coli O157:H7, this protein is L-asparaginase 1 (ansA).